The following is a 274-amino-acid chain: Putative hydro-lyase Veis_4744 (274 aa).

This sequence belongs to the D-glutamate cyclase family.

The protein is Putative hydro-lyase Veis_4744 of Verminephrobacter eiseniae (strain EF01-2).